Here is a 189-residue protein sequence, read N- to C-terminus: Pyridoxal 5'-phosphate synthase subunit PdxT (189 aa).

50–52 (GES) serves as a coordination point for L-glutamine. Catalysis depends on cysteine 80, which acts as the Nucleophile. Residues arginine 107 and 134 to 135 (IR) contribute to the L-glutamine site. Catalysis depends on charge relay system residues histidine 169 and glutamate 171.

It belongs to the glutaminase PdxT/SNO family. In the presence of PdxS, forms a dodecamer of heterodimers. Only shows activity in the heterodimer.

The enzyme catalyses aldehydo-D-ribose 5-phosphate + D-glyceraldehyde 3-phosphate + L-glutamine = pyridoxal 5'-phosphate + L-glutamate + phosphate + 3 H2O + H(+). It catalyses the reaction L-glutamine + H2O = L-glutamate + NH4(+). It participates in cofactor biosynthesis; pyridoxal 5'-phosphate biosynthesis. Catalyzes the hydrolysis of glutamine to glutamate and ammonia as part of the biosynthesis of pyridoxal 5'-phosphate. The resulting ammonia molecule is channeled to the active site of PdxS. The sequence is that of Pyridoxal 5'-phosphate synthase subunit PdxT from Picrophilus torridus (strain ATCC 700027 / DSM 9790 / JCM 10055 / NBRC 100828 / KAW 2/3).